An 88-amino-acid polypeptide reads, in one-letter code: Small ribosomal subunit protein bS20 (88 aa).

The protein belongs to the bacterial ribosomal protein bS20 family.

Functionally, binds directly to 16S ribosomal RNA. The sequence is that of Small ribosomal subunit protein bS20 from Aromatoleum aromaticum (strain DSM 19018 / LMG 30748 / EbN1) (Azoarcus sp. (strain EbN1)).